We begin with the raw amino-acid sequence, 456 residues long: Bifunctional protein GlmU (456 aa).

The pyrophosphorylase stretch occupies residues 1-229 (MLNNAMSVVI…LSEVEGVNNR (229 aa)). UDP-N-acetyl-alpha-D-glucosamine is bound by residues 11–14 (LAAG), lysine 25, glutamine 76, 81–82 (GT), 103–105 (YGD), glycine 140, glutamate 154, asparagine 169, and asparagine 227. Aspartate 105 contributes to the Mg(2+) binding site. Asparagine 227 is a Mg(2+) binding site. The segment at 230-250 (LQLSRLERVYQSEQAEKLLLA) is linker. The N-acetyltransferase stretch occupies residues 251–456 (GVMLRDPARF…EGWRRPVKKK (206 aa)). Residues arginine 333 and lysine 351 each contribute to the UDP-N-acetyl-alpha-D-glucosamine site. The Proton acceptor role is filled by histidine 363. UDP-N-acetyl-alpha-D-glucosamine contacts are provided by tyrosine 366 and asparagine 377. Residues alanine 380, 386–387 (NY), serine 405, alanine 423, and arginine 440 each bind acetyl-CoA.

It in the N-terminal section; belongs to the N-acetylglucosamine-1-phosphate uridyltransferase family. In the C-terminal section; belongs to the transferase hexapeptide repeat family. As to quaternary structure, homotrimer. It depends on Mg(2+) as a cofactor.

The protein localises to the cytoplasm. It carries out the reaction alpha-D-glucosamine 1-phosphate + acetyl-CoA = N-acetyl-alpha-D-glucosamine 1-phosphate + CoA + H(+). The enzyme catalyses N-acetyl-alpha-D-glucosamine 1-phosphate + UTP + H(+) = UDP-N-acetyl-alpha-D-glucosamine + diphosphate. It participates in nucleotide-sugar biosynthesis; UDP-N-acetyl-alpha-D-glucosamine biosynthesis; N-acetyl-alpha-D-glucosamine 1-phosphate from alpha-D-glucosamine 6-phosphate (route II): step 2/2. The protein operates within nucleotide-sugar biosynthesis; UDP-N-acetyl-alpha-D-glucosamine biosynthesis; UDP-N-acetyl-alpha-D-glucosamine from N-acetyl-alpha-D-glucosamine 1-phosphate: step 1/1. It functions in the pathway bacterial outer membrane biogenesis; LPS lipid A biosynthesis. Catalyzes the last two sequential reactions in the de novo biosynthetic pathway for UDP-N-acetylglucosamine (UDP-GlcNAc). The C-terminal domain catalyzes the transfer of acetyl group from acetyl coenzyme A to glucosamine-1-phosphate (GlcN-1-P) to produce N-acetylglucosamine-1-phosphate (GlcNAc-1-P), which is converted into UDP-GlcNAc by the transfer of uridine 5-monophosphate (from uridine 5-triphosphate), a reaction catalyzed by the N-terminal domain. In Escherichia coli O157:H7 (strain EC4115 / EHEC), this protein is Bifunctional protein GlmU.